A 172-amino-acid polypeptide reads, in one-letter code: Protein-export protein SecB (172 aa).

The protein belongs to the SecB family. In terms of assembly, homotetramer, a dimer of dimers. One homotetramer interacts with 1 SecA dimer.

It localises to the cytoplasm. Functionally, one of the proteins required for the normal export of preproteins out of the cell cytoplasm. It is a molecular chaperone that binds to a subset of precursor proteins, maintaining them in a translocation-competent state. It also specifically binds to its receptor SecA. This chain is Protein-export protein SecB, found in Cupriavidus pinatubonensis (strain JMP 134 / LMG 1197) (Cupriavidus necator (strain JMP 134)).